Consider the following 659-residue polypeptide: MIDLIFPDGSARQYADGSTGRDVAASISKSLEKKALLIKLDGKLLDLDRPLTPDLLGGGNRFEIITRDSPDALEVIRHDTAHVLAEAVQELFPGTQVTIGPNVEDGFYYDFARDEPFSLDDLPKIEERMRQIVDRDEKIRREEVDRDAAIADFEAMGESYKAQIIRDLPASDTITVYHQGEKWKDLCRGPHLPSTKAVGKAFKLTKLAGAYWRGDQNNAQLQRIYGTSWATEADLEAHLKRIEEAERRDHRKLGKTMDLFHIQEEGKGMVFWHPKGWTLYLALEAYMRRRLDAAGYREVKTPQILDKSLWERSGHAEKFGHAMFMCESAEGEVLAVKPMNCPGHIQIFNVGQKSYRELPLRMAEFGACHRYEPSGAMHGIMRVRAFTQDDAHIFCREEQVTEESARFIELLRSVYSDLGMHLADTKFSTRPELRAGEDAVWDKAEAALSAAAEAAGETLVLQEGEGAFYGPKLEFSLKDAIGRVWQCGTLQLDFVLPERLDAEYVAEDGSKKRPVMLHRAILGSFERFIGILLENYAGHLPLWLAPVQVVVATITSDADDYAQRVAERLTSMGIRAEVDFRNEKINYKIREHSLAKVPVIAVVGRKEAENGEVALRRLGGEGQKVLSLEDAVRALTEEATPPDLARDRAVAAPAELAQA.

Residues 1–61 (MIDLIFPDGS…TPDLLGGGNR (61 aa)) enclose the TGS domain. Residues 249 to 541 (DHRKLGKTMD…LLENYAGHLP (293 aa)) are catalytic. Zn(2+) contacts are provided by C341, H392, and H518. Residues 637-659 (EEATPPDLARDRAVAAPAELAQA) form a disordered region.

The protein belongs to the class-II aminoacyl-tRNA synthetase family. In terms of assembly, homodimer. Zn(2+) is required as a cofactor.

It localises to the cytoplasm. It carries out the reaction tRNA(Thr) + L-threonine + ATP = L-threonyl-tRNA(Thr) + AMP + diphosphate + H(+). Catalyzes the attachment of threonine to tRNA(Thr) in a two-step reaction: L-threonine is first activated by ATP to form Thr-AMP and then transferred to the acceptor end of tRNA(Thr). Also edits incorrectly charged L-seryl-tRNA(Thr). In Caulobacter sp. (strain K31), this protein is Threonine--tRNA ligase.